The following is a 185-amino-acid chain: Lectin B4 (185 aa).

Residue N48 is glycosylated (N-linked (GlcNAc...) asparagine). The Mn(2+) site is built by E111 and D113. Ca(2+)-binding residues include D113, Y115, N117, and D120. D120 contributes to the Mn(2+) binding site. Residue N122 is glycosylated (N-linked (GlcNAc...) asparagine). A Mn(2+)-binding site is contributed by H125.

Belongs to the leguminous lectin family. In terms of assembly, homo- or heterotetramer. V.villosa isolectins are composed of either two subunits a and two subunits B (A2B2), four subunits A (A4), or four subunits B (B4). The predominant form, isolectin B4, has no A1 erythrocyte agglutinating activity.

N-acetyl-D-galactosamine specific lectin. Binds the Tn determinant (GalNAc-alpha-O-Ser/Thr) of the tumor-associated glycopeptide. Could be required for agglutinating cells such as Tn-exposed erythrocytes. The polypeptide is Lectin B4 (Vicia villosa (Hairy vetch)).